A 547-amino-acid polypeptide reads, in one-letter code: Elongator complex protein 3 (547 aa).

Residues 82–372 enclose the Radical SAM core domain; that stretch reads RTASGIAVVA…YRVQRDIPMP (291 aa). [4Fe-4S] cluster contacts are provided by cysteine 99, cysteine 109, and cysteine 112. Serine 161 is subject to Phosphoserine. Acetyl-CoA is bound at residue lysine 164. The residue at position 202 (tyrosine 202) is a Phosphotyrosine. Lysine 229 is subject to N6-methyllysine. Residue tyrosine 251 is modified to Phosphotyrosine. Positions 396–547 constitute an N-acetyltransferase domain; the sequence is IQCRDVRTRE…QGPYMVKTLE (152 aa). Acetyl-CoA contacts are provided by residues 474-477, 497-499, and tyrosine 530; these read ELHV and FGM.

It belongs to the ELP3 family. As to quaternary structure, component of the elongator complex which consists of ELP1, ELP2, ELP3, ELP4, ELP5 and ELP6. ELP1, ELP2 and ELP3 form the elongator core complex. Interacts with alpha-tubulin. The cofactor is [4Fe-4S] cluster. In terms of processing, tyrosine-phosphorylated; phosphorylation on Tyr-202 does not affect elongator complex integrity or ELP3 protein stability. Also serine/threonine-phosphorylated.

It is found in the cytoplasm. The protein resides in the nucleus. The catalysed reaction is uridine(34) in tRNA + acetyl-CoA + S-adenosyl-L-methionine + H2O = 5-(carboxymethyl)uridine(34) in tRNA + 5'-deoxyadenosine + L-methionine + CoA + 2 H(+). The protein operates within tRNA modification; 5-methoxycarbonylmethyl-2-thiouridine-tRNA biosynthesis. Catalytic tRNA acetyltransferase subunit of the elongator complex which is required for multiple tRNA modifications, including mcm5U (5-methoxycarbonylmethyl uridine), mcm5s2U (5-methoxycarbonylmethyl-2-thiouridine), and ncm5U (5-carbamoylmethyl uridine). In the elongator complex, acts as a tRNA uridine(34) acetyltransferase by mediating formation of carboxymethyluridine in the wobble base at position 34 in tRNAs. May also act as a protein lysine acetyltransferase by mediating acetylation of target proteins; such activity is however unclear in vivo and recent evidences suggest that ELP3 primarily acts as a tRNA acetyltransferase. Involved in neurogenesis: regulates the migration and branching of projection neurons in the developing cerebral cortex, through a process depending on alpha-tubulin acetylation. Required for acetylation of GJA1 in the developing cerebral cortex. The sequence is that of Elongator complex protein 3 from Bos taurus (Bovine).